We begin with the raw amino-acid sequence, 63 residues long: Large ribosomal subunit protein bL28 (63 aa).

The protein belongs to the bacterial ribosomal protein bL28 family.

This chain is Large ribosomal subunit protein bL28, found in Desulforudis audaxviator (strain MP104C).